We begin with the raw amino-acid sequence, 161 residues long: Globin CTT-VIIB-3 (161 aa).

An N-terminal signal peptide occupies residues 1-16 (MKFFAVLALCIVGAIA). A Globin domain is found at 18-161 (PLTADEASLV…NTYAIVVPRL (144 aa)). Heme b contacts are provided by His-76 and His-111.

Belongs to the globin family. As to quaternary structure, homodimer.

This is Globin CTT-VIIB-3 (CTT-7B3) from Chironomus thummi thummi (Midge).